Reading from the N-terminus, the 187-residue chain is Large ribosomal subunit protein bL25 (187 aa).

This sequence belongs to the bacterial ribosomal protein bL25 family. CTC subfamily. Part of the 50S ribosomal subunit; part of the 5S rRNA/L5/L18/L25 subcomplex. Contacts the 5S rRNA. Binds to the 5S rRNA independently of L5 and L18.

This is one of the proteins that binds to the 5S RNA in the ribosome where it forms part of the central protuberance. This chain is Large ribosomal subunit protein bL25, found in Tropheryma whipplei (strain Twist) (Whipple's bacillus).